Reading from the N-terminus, the 220-residue chain is Casparian strip membrane protein 4 (220 aa).

The disordered stretch occupies residues 1–39 (MDSRREVEESSTAPILESKRTRSNGKGKSIDGDHSPPHA). At 1–60 (MDSRREVEESSTAPILESKRTRSNGKGKSIDGDHSPPHAATVVTTKATPLQKGGMKKGIA) the chain is on the cytoplasmic side. The chain crosses the membrane as a helical span at residues 61-81 (ILDFILRLGAIGAALGAAVIM). Residues 82–108 (GTNEQILPFFTQFLQFHAQWDDFPMFK) are Extracellular-facing. A helical transmembrane segment spans residues 109–129 (FFVVANGAAAGFLILSLPFSI). The Cytoplasmic segment spans residues 130–141 (VCIVRPLAAGPR). The chain crosses the membrane as a helical span at residues 142 to 162 (FLLVIVDLVLMALVVAAASSA). Residues 163 to 194 (AAVVYLAHNGSQDANWNAICQQFTDFCQGSSL) lie on the Extracellular side of the membrane. Asn171 carries an N-linked (GlcNAc...) asparagine glycan. A helical transmembrane segment spans residues 195-215 (AVVASFVASVFLACLVVVSSV). At 216–220 (ALKRT) the chain is on the cytoplasmic side.

It belongs to the Casparian strip membrane proteins (CASP) family. In terms of assembly, homodimer and heterodimers.

It is found in the cell membrane. Its function is as follows. Regulates membrane-cell wall junctions and localized cell wall deposition. Required for establishment of the Casparian strip membrane domain (CSD) and the subsequent formation of Casparian strips, a cell wall modification of the root endodermis that determines an apoplastic barrier between the intraorganismal apoplasm and the extraorganismal apoplasm and prevents lateral diffusion. The sequence is that of Casparian strip membrane protein 4 from Medicago truncatula (Barrel medic).